The following is a 258-amino-acid chain: Venom plasminogen activator TSV-PA (258 aa).

The N-terminal stretch at 1-18 (MELIRVLANLLILQLSYA) is a signal peptide. The propeptide occupies 19-24 (QKSSEL). One can recognise a Peptidase S1 domain in the interval 25–249 (VFGGDECNIN…YLDWIKSIIA (225 aa)). 6 disulfide bridges follow: cysteine 31-cysteine 163, cysteine 50-cysteine 66, cysteine 98-cysteine 256, cysteine 142-cysteine 210, cysteine 174-cysteine 189, and cysteine 200-cysteine 225. Catalysis depends on charge relay system residues histidine 65 and aspartate 110. Asparagine 185 carries N-linked (GlcNAc...) asparagine glycosylation. The Charge relay system role is filled by serine 204.

This sequence belongs to the peptidase S1 family. Snake venom subfamily. Monomer. In terms of tissue distribution, expressed by the venom gland.

The protein localises to the secreted. Snake venom serine protease that activates plasminogen. The chain is Venom plasminogen activator TSV-PA from Trimeresurus stejnegeri (Chinese green tree viper).